The following is a 415-amino-acid chain: ATP-dependent RNA helicase RhlB (415 aa).

The short motif at 9 to 37 is the Q motif element; the sequence is KKFSDFALYPPIVEVLDSKGFNNCTPIQA. The 180-residue stretch at 40–219 folds into the Helicase ATP-binding domain; the sequence is LPTTLAGKDV…FEHMNNAEYV (180 aa). 53–60 is an ATP binding site; sequence AQTGTGKT. Positions 165–168 match the DEAD box motif; that stretch reads DEAD. Positions 245-390 constitute a Helicase C-terminal domain; sequence RLLQTLIEEE…VSKYNSDALL (146 aa). The segment at 396–415 is disordered; that stretch reads PKRLTRRRSGAPRHNRKRPG. Basic residues predominate over residues 398-415; the sequence is RLTRRRSGAPRHNRKRPG.

The protein belongs to the DEAD box helicase family. RhlB subfamily. Component of the RNA degradosome, which is a multiprotein complex involved in RNA processing and mRNA degradation.

The protein localises to the cytoplasm. The enzyme catalyses ATP + H2O = ADP + phosphate + H(+). In terms of biological role, DEAD-box RNA helicase involved in RNA degradation. Has RNA-dependent ATPase activity and unwinds double-stranded RNA. This Sodalis glossinidius (strain morsitans) protein is ATP-dependent RNA helicase RhlB.